The sequence spans 213 residues: Ribosomal RNA large subunit methyltransferase E (213 aa).

5 residues coordinate S-adenosyl-L-methionine: Gly-59, Phe-61, Asp-79, Asp-97, and Asp-121. Lys-161 acts as the Proton acceptor in catalysis.

This sequence belongs to the class I-like SAM-binding methyltransferase superfamily. RNA methyltransferase RlmE family.

The protein resides in the cytoplasm. It carries out the reaction uridine(2552) in 23S rRNA + S-adenosyl-L-methionine = 2'-O-methyluridine(2552) in 23S rRNA + S-adenosyl-L-homocysteine + H(+). Specifically methylates the uridine in position 2552 of 23S rRNA at the 2'-O position of the ribose in the fully assembled 50S ribosomal subunit. The protein is Ribosomal RNA large subunit methyltransferase E of Myxococcus xanthus (strain DK1622).